A 539-amino-acid polypeptide reads, in one-letter code: Glutamyl-tRNA(Gln) amidotransferase subunit B, mitochondrial (539 aa).

Belongs to the GatB/GatE family. GatB subfamily. In terms of assembly, subunit of the heterotrimeric GatFAB amidotransferase (AdT) complex, composed of A, B and F subunits.

The protein localises to the mitochondrion. The enzyme catalyses L-glutamyl-tRNA(Gln) + L-glutamine + ATP + H2O = L-glutaminyl-tRNA(Gln) + L-glutamate + ADP + phosphate + H(+). In terms of biological role, allows the formation of correctly charged Gln-tRNA(Gln) through the transamidation of misacylated Glu-tRNA(Gln) in the mitochondria. The reaction takes place in the presence of glutamine and ATP through an activated gamma-phospho-Glu-tRNA(Gln). This chain is Glutamyl-tRNA(Gln) amidotransferase subunit B, mitochondrial, found in Kluyveromyces lactis (strain ATCC 8585 / CBS 2359 / DSM 70799 / NBRC 1267 / NRRL Y-1140 / WM37) (Yeast).